The sequence spans 105 residues: Putative toxin MazF8 (105 aa).

In terms of assembly, forms a complex with cognate antitoxin MazE8.

Its function is as follows. Putative toxic component of a type II toxin-antitoxin (TA) system. Acts as an endoribonuclease. Neutralized by coexpression with cognate antitoxin MazE8. The protein is Putative toxin MazF8 (mazF8) of Mycobacterium tuberculosis (strain CDC 1551 / Oshkosh).